The following is a 150-amino-acid chain: Allograft inflammatory factor 1-like (150 aa).

The residue at position 2 (Ser2) is an N-acetylserine. Residue Ser2 is modified to Phosphoserine. One can recognise an EF-hand 1 domain in the interval 47 to 82 (EKLTAFKEKYMEFDLNNEGEIDLMSLKRMMEKLGVP). Asp60, Asn62, Glu64, and Glu66 together coordinate Ca(2+). In terms of domain architecture, EF-hand 2; degenerate spans 83–117 (KTHLEMKKMISEVTGGVSDTISYRDFVNMMLGKRS). Positions 129-150 (KANESSPKPVGPPPERDIASLP) are disordered. Phosphoserine is present on Ser134.

Homodimer (Potential). Monomer.

It is found in the cytoplasm. It localises to the cytoskeleton. Its subcellular location is the cell projection. The protein localises to the ruffle membrane. Actin-binding protein that promotes actin bundling. May neither bind calcium nor depend on calcium for function. The chain is Allograft inflammatory factor 1-like (AIF1L) from Homo sapiens (Human).